The primary structure comprises 560 residues: Flagellar M-ring protein (560 aa).

Residues 26–46 (IPLIVAGSAAVAIVVAMVLWA) traverse the membrane as a helical segment. The disordered stretch occupies residues 304-372 (VGAGYPGGVP…TSNYEVDRTI (69 aa)). Residues 331-353 (PPTNQQNAQNTPQTSTSTNSNSA) show a composition bias toward low complexity. Residues 354–366 (GPRSTQRNETSNY) show a composition bias toward polar residues. Residues 455 to 475 (FIDQLLAAGRWLLVLVVAWIL) traverse the membrane as a helical segment.

The protein belongs to the FliF family. The basal body constitutes a major portion of the flagellar organelle and consists of four rings (L,P,S, and M) mounted on a central rod. The M ring is integral to the inner membrane of the cell and may be connected to the flagellar rod via the S ring. The S (supramembrane ring) lies just distal to the M ring. The L and P rings lie in the outer membrane and the periplasmic space, respectively.

It localises to the cell inner membrane. The protein resides in the bacterial flagellum basal body. The M ring may be actively involved in energy transduction. The protein is Flagellar M-ring protein (fliF) of Salmonella typhimurium (strain LT2 / SGSC1412 / ATCC 700720).